The chain runs to 155 residues: Ribosome maturation factor RimP (155 aa).

The protein belongs to the RimP family.

The protein resides in the cytoplasm. In terms of biological role, required for maturation of 30S ribosomal subunits. The sequence is that of Ribosome maturation factor RimP from Desulforapulum autotrophicum (strain ATCC 43914 / DSM 3382 / VKM B-1955 / HRM2) (Desulfobacterium autotrophicum).